Here is a 771-residue protein sequence, read N- to C-terminus: 5-methyltetrahydropteroyltriglutamate--homocysteine methyltransferase (771 aa).

Residues Arg16–Lys19 and Lys117 each bind 5-methyltetrahydropteroyltri-L-glutamate. L-homocysteine contacts are provided by residues Ile443–Ser445 and Glu496. L-methionine contacts are provided by residues Ile443 to Ser445 and Glu496. Residues Arg527–Cys528 and Trp573 contribute to the 5-methyltetrahydropteroyltri-L-glutamate site. Residue Asp611 participates in L-homocysteine binding. Asp611 serves as a coordination point for L-methionine. Residue Glu617 coordinates 5-methyltetrahydropteroyltri-L-glutamate. Zn(2+) is bound by residues His653, Cys655, and Glu677. His706 acts as the Proton donor in catalysis. Cys738 provides a ligand contact to Zn(2+).

The protein belongs to the vitamin-B12 independent methionine synthase family. Zn(2+) serves as cofactor.

The enzyme catalyses 5-methyltetrahydropteroyltri-L-glutamate + L-homocysteine = tetrahydropteroyltri-L-glutamate + L-methionine. It functions in the pathway amino-acid biosynthesis; L-methionine biosynthesis via de novo pathway; L-methionine from L-homocysteine (MetE route): step 1/1. Functionally, catalyzes the transfer of a methyl group from 5-methyltetrahydrofolate to homocysteine resulting in methionine formation. The polypeptide is 5-methyltetrahydropteroyltriglutamate--homocysteine methyltransferase (Stutzerimonas stutzeri (strain A1501) (Pseudomonas stutzeri)).